The primary structure comprises 143 residues: Large ribosomal subunit protein uL11 (143 aa).

It belongs to the universal ribosomal protein uL11 family. In terms of assembly, part of the ribosomal stalk of the 50S ribosomal subunit. Interacts with L10 and the large rRNA to form the base of the stalk. L10 forms an elongated spine to which L12 dimers bind in a sequential fashion forming a multimeric L10(L12)X complex. Post-translationally, one or more lysine residues are methylated.

Functionally, forms part of the ribosomal stalk which helps the ribosome interact with GTP-bound translation factors. This chain is Large ribosomal subunit protein uL11, found in Saccharophagus degradans (strain 2-40 / ATCC 43961 / DSM 17024).